We begin with the raw amino-acid sequence, 98 residues long: U10-barytoxin-Tl1a (98 aa).

Residues Met-1–Ala-21 form the signal peptide. The propeptide occupies Ser-22–Arg-50. Cystine bridges form between Cys-57-Cys-71, Cys-64-Cys-76, and Cys-70-Cys-89.

This sequence belongs to the neurotoxin 10 (Hwtx-1) family. 27 (ICK-3) subfamily. In terms of tissue distribution, expressed by the venom gland.

It localises to the secreted. Its function is as follows. Ion channel inhibitor. This Trittame loki (Brush-footed trapdoor spider) protein is U10-barytoxin-Tl1a.